Reading from the N-terminus, the 40-residue chain is Photosystem II reaction center protein J (40 aa).

Met2 is modified (N-acetylmethionine). Topologically, residues 2–11 are cytoplasmic; it reads MSEGGRIPLW. A helical transmembrane segment spans residues 12-26; sequence IVATVAGMGVIVIVG. The Lumenal segment spans residues 27 to 40; sequence LFFYGAYAGLGSSL.

This sequence belongs to the PsbJ family. In terms of assembly, PSII is composed of 1 copy each of membrane proteins PsbA, PsbB, PsbC, PsbD, PsbE, PsbF, PsbH, PsbI, PsbJ, PsbK, PsbL, PsbM, PsbT, PsbX, PsbY, PsbZ, Psb30/Ycf12, peripheral proteins PsbO, CyanoQ (PsbQ), PsbU, PsbV and a large number of cofactors. It forms dimeric complexes. Requires PSII binds multiple chlorophylls, carotenoids and specific lipids. as cofactor.

Its subcellular location is the cellular thylakoid membrane. Functionally, one of the components of the core complex of photosystem II (PSII). PSII is a light-driven water:plastoquinone oxidoreductase that uses light energy to abstract electrons from H(2)O, generating O(2) and a proton gradient subsequently used for ATP formation. It consists of a core antenna complex that captures photons, and an electron transfer chain that converts photonic excitation into a charge separation. In terms of biological role, may play a regulatory role in PSII biogenesis. This is Photosystem II reaction center protein J from Thermosynechococcus vestitus (strain NIES-2133 / IAM M-273 / BP-1).